Here is a 338-residue protein sequence, read N- to C-terminus: 1-aminocyclopropane-1-carboxylate deaminase (338 aa).

Lys51 is modified (N6-(pyridoxal phosphate)lysine). Ser78 acts as the Nucleophile in catalysis.

The protein belongs to the ACC deaminase/D-cysteine desulfhydrase family. As to quaternary structure, homotrimer. Pyridoxal 5'-phosphate is required as a cofactor.

It catalyses the reaction 1-aminocyclopropane-1-carboxylate + H2O = 2-oxobutanoate + NH4(+). Functionally, catalyzes a cyclopropane ring-opening reaction, the irreversible conversion of 1-aminocyclopropane-1-carboxylate (ACC) to ammonia and alpha-ketobutyrate. Allows growth on ACC as a nitrogen source. In Burkholderia vietnamiensis (strain G4 / LMG 22486) (Burkholderia cepacia (strain R1808)), this protein is 1-aminocyclopropane-1-carboxylate deaminase.